A 154-amino-acid chain; its full sequence is Xanthine-guanine phosphoribosyltransferase (154 aa).

Residues 38-39 (RG), K71, and 90-98 (DDLVDTGGT) contribute to the 5-phospho-alpha-D-ribose 1-diphosphate site. K71 is a GMP binding site. D91 provides a ligand contact to Mg(2+). Guanine contacts are provided by D94 and I137. Xanthine-binding residues include D94 and I137. GMP-binding positions include 94-98 (DTGGT) and 136-137 (WI).

The protein belongs to the purine/pyrimidine phosphoribosyltransferase family. XGPT subfamily. As to quaternary structure, homotetramer. Mg(2+) serves as cofactor.

The protein resides in the cell inner membrane. The enzyme catalyses GMP + diphosphate = guanine + 5-phospho-alpha-D-ribose 1-diphosphate. It carries out the reaction XMP + diphosphate = xanthine + 5-phospho-alpha-D-ribose 1-diphosphate. The catalysed reaction is IMP + diphosphate = hypoxanthine + 5-phospho-alpha-D-ribose 1-diphosphate. The protein operates within purine metabolism; GMP biosynthesis via salvage pathway; GMP from guanine: step 1/1. It participates in purine metabolism; XMP biosynthesis via salvage pathway; XMP from xanthine: step 1/1. Functionally, purine salvage pathway enzyme that catalyzes the transfer of the ribosyl-5-phosphate group from 5-phospho-alpha-D-ribose 1-diphosphate (PRPP) to the N9 position of the 6-oxopurines guanine and xanthine to form the corresponding ribonucleotides GMP (guanosine 5'-monophosphate) and XMP (xanthosine 5'-monophosphate), with the release of PPi. To a lesser extent, also acts on hypoxanthine. In Buchnera aphidicola subsp. Schizaphis graminum (strain Sg), this protein is Xanthine-guanine phosphoribosyltransferase.